Reading from the N-terminus, the 173-residue chain is Archaemetzincin (173 aa).

His130 is a binding site for Zn(2+). Catalysis depends on Glu131, which acts as the Proton acceptor. Positions 134, 140, 141, 146, 165, and 168 each coordinate Zn(2+).

It belongs to the peptidase M54 family. In terms of assembly, monomer. Requires Zn(2+) as cofactor.

In terms of biological role, probable zinc metalloprotease whose natural substrate is unknown. The polypeptide is Archaemetzincin (Haloarcula marismortui (strain ATCC 43049 / DSM 3752 / JCM 8966 / VKM B-1809) (Halobacterium marismortui)).